Consider the following 240-residue polypeptide: Vacuolar-sorting protein SNF7 (240 aa).

Residue Thr72 is modified to Phosphothreonine. 2 positions are modified to phosphoserine: Ser119 and Ser193. Residues 193–240 are disordered; sequence SENKVSLPSVPSNKIKQSENSVKDGEEEEDEEDEDEKALRELQAEMGL. The span at 195–212 shows a compositional bias: polar residues; it reads NKVSLPSVPSNKIKQSEN. A compositionally biased stretch (acidic residues) spans 217–228; it reads GEEEEDEEDEDE. Lys229 participates in a covalent cross-link: Glycyl lysine isopeptide (Lys-Gly) (interchain with G-Cter in ubiquitin). Over residues 229–240 the composition is skewed to basic and acidic residues; the sequence is KALRELQAEMGL.

This sequence belongs to the SNF7 family. In terms of assembly, core component of the ESCRT-III complex (endosomal sorting required for transport complex III). ESCRT-III appears to be sequentially assembled as a flat lattice on the endosome membrane and forms a transient 450 kDa complex that contains DID4, oligomerized SNF7, VPS20 and VPS24. SNF7 polymerizes into spirals at the surface of lipid bilayers. SNF7 polymerization is nucleated by association of SNF7 with VPS20; the process is terminated through association of VPS24, possibly by capping the SNF7 filament. Interacts with VTA1; the interaction requires DID2. Interacts with BRO1. Interacts with DOA4. Interacts with HEH1 and HEH2. Interacts with RIM20 and YGR122W.

It is found in the cytoplasm. The protein resides in the endosome membrane. The protein localises to the nucleus envelope. Acts a component of the ESCRT-III complex required for the sorting and concentration of proteins resulting in the entry of these proteins into the invaginating vesicles of the multivesicular body (MVB). The sequential action of ESCRT-0, -I, and -II together with the ordered assembly of ESCRT-III links membrane invagination to cargo sorting. Membrane scission in the neck of the growing vesicle releases mature, cargo-laden ILVs into the lumen. ESCRT-III is critical for late steps in MVB sorting, such as membrane invagination and final cargo sorting and recruitment of late-acting components of the sorting machinery. SNF7 is the most abundant ESCRT-III subunit which forms membrane-sculpting filaments with 30 Angstrom periodicity and a exposed cationic membrane-binding surface. Its activation requires a prominent conformational rearrangement to expose protein-membrane and protein-protein interfaces. SNF7 filaments then form spirals that could function as spiral springs. The elastic expansion of compressed SNF7 spirals generates an area difference between the two sides of the membrane and thus curvature which could be the origin of membrane deformation leading eventually to fission. SNF7 recruits BRO1, which in turn recruits DOA4, which deubiquitinates cargos before their enclosure within MVB vesicles. ESCRT-III is also recruited to the nuclear envelope (NE) by integral INM proteins to surveil and clear defective nuclear pore complex (NPC) assembly intermediates to ensure the fidelity of NPC assembly. This is Vacuolar-sorting protein SNF7 from Saccharomyces cerevisiae (strain ATCC 204508 / S288c) (Baker's yeast).